Consider the following 82-residue polypeptide: UPF0291 protein PEPE_0871 (82 aa).

The protein belongs to the UPF0291 family.

It is found in the cytoplasm. This chain is UPF0291 protein PEPE_0871, found in Pediococcus pentosaceus (strain ATCC 25745 / CCUG 21536 / LMG 10740 / 183-1w).